A 702-amino-acid polypeptide reads, in one-letter code: Polynucleotide 5'-hydroxyl-kinase NOL9 (702 aa).

A2 bears the N-acetylalanine mark. Positions 31 to 47 (RRPRRRLGSLRWCGRRR) match the Nucleolar localization signal motif. The tract at residues 69 to 101 (VSRAAAARRPNTATPSPIPSPTPASEPESEPEL) is disordered. Residues 71 to 83 (RAAAARRPNTATP) are compositionally biased toward low complexity. Residue 306-313 (GSQDVGKS) participates in ATP binding. The tract at residues 480-702 (FADEEKESPV…RRPKFCRKMK (223 aa)) is interaction with LAS1L. A Glycyl lysine isopeptide (Lys-Gly) (interchain with G-Cter in SUMO2) cross-link involves residue K485. Residue S487 is modified to Phosphoserine. Basic and acidic residues predominate over residues 680-689 (AREPEEAHKE). Residues 680 to 702 (AREPEEAHKEKPYRRPKFCRKMK) are disordered. A compositionally biased stretch (basic residues) spans 690 to 702 (KPYRRPKFCRKMK).

Belongs to the Clp1 family. NOL9/GRC3 subfamily. Interacts with PELP1, WDR18 and SENP3. Interacts with LAS1L to form an ITS2 pre-rRNA endonuclease-kinase complex.

It is found in the nucleus. Its subcellular location is the nucleolus. It carries out the reaction a 5'-end dephospho-2'-deoxyribonucleoside-DNA + ATP = a 5'-end 5'-phospho-2'-deoxyribonucleoside-DNA + ADP + H(+). It catalyses the reaction a 5'-end dephospho-ribonucleoside-RNA + ATP = a 5'-end 5'-phospho-ribonucleoside-RNA + ADP + H(+). In terms of biological role, polynucleotide kinase that can phosphorylate the 5'-hydroxyl groups of single-stranded and double-stranded RNA and DNA substrates. Involved in rRNA processing and its kinase activity is required for the processing of the 32S precursor into 5.8S and 28S rRNAs, more specifically for the generation of the major 5.8S(S) form. Required for the efficient pre-rRNA processing of internal transcribed spacer 2 (ITS2). Associates with LAS1L to form an ITS2 pre-rRNA endonuclease-kinase complex and is responsible for the transport of this complex into the nucleolus. The sequence is that of Polynucleotide 5'-hydroxyl-kinase NOL9 (NOL9) from Homo sapiens (Human).